We begin with the raw amino-acid sequence, 162 residues long: Ribosome maturation factor RimM (162 aa).

A PRC barrel domain is found at 86–160 (EGRYYYFALI…SIHVDPIPGL (75 aa)).

Belongs to the RimM family. In terms of assembly, binds ribosomal protein uS19.

It is found in the cytoplasm. In terms of biological role, an accessory protein needed during the final step in the assembly of 30S ribosomal subunit, possibly for assembly of the head region. Essential for efficient processing of 16S rRNA. May be needed both before and after RbfA during the maturation of 16S rRNA. It has affinity for free ribosomal 30S subunits but not for 70S ribosomes. In Thermus thermophilus (strain ATCC 27634 / DSM 579 / HB8), this protein is Ribosome maturation factor RimM.